The chain runs to 225 residues: Cyanamide hydratase DDI2 (225 aa).

In terms of domain architecture, HD spans 52–162; sequence VLNHSLRVFQ…LQIATTLDNV (111 aa).

This sequence belongs to the cyanamide dehydrase family. As to quaternary structure, homohexamer. It depends on Zn(2+) as a cofactor.

It catalyses the reaction urea = cyanamide + H2O. Cyanamide hydratase involved in the detoxification and/or utilization of cyanamide, a toxic nitrile compound distributed widely in the environment. This chain is Cyanamide hydratase DDI2, found in Saccharomyces cerevisiae (strain ATCC 204508 / S288c) (Baker's yeast).